A 20-amino-acid chain; its full sequence is Hemocyanin subunit 6 (20 aa).

Belongs to the tyrosinase family. Hemocyanin subfamily. Hemolymph.

It localises to the secreted. The protein resides in the extracellular space. Hemocyanins are copper-containing oxygen carriers occurring freely dissolved in the hemolymph of many mollusks and arthropods. The chain is Hemocyanin subunit 6 from Homarus americanus (American lobster).